The following is a 468-amino-acid chain: 3-isopropylmalate dehydratase large subunit (468 aa).

3 residues coordinate [4Fe-4S] cluster: C347, C407, and C410.

The protein belongs to the aconitase/IPM isomerase family. LeuC type 1 subfamily. Heterodimer of LeuC and LeuD. [4Fe-4S] cluster serves as cofactor.

It catalyses the reaction (2R,3S)-3-isopropylmalate = (2S)-2-isopropylmalate. It participates in amino-acid biosynthesis; L-leucine biosynthesis; L-leucine from 3-methyl-2-oxobutanoate: step 2/4. Its function is as follows. Catalyzes the isomerization between 2-isopropylmalate and 3-isopropylmalate, via the formation of 2-isopropylmaleate. This Campylobacter jejuni subsp. jejuni serotype O:23/36 (strain 81-176) protein is 3-isopropylmalate dehydratase large subunit.